The primary structure comprises 628 residues: RING finger protein 112 (628 aa).

An RING-type zinc finger spans residues 57–98 (CSICLERPREPISLDCGHDFCPRCFSTHRVPGCGPPCCPECR). Residues 132–628 (AVRAEPLLLV…GDREPLLQEE (497 aa)) form an interaction with ZBTB16 region. Residues 167-409 (DTPVCLLAVL…RCPGYWSEGR (243 aa)) enclose the GB1/RHD3-type G domain. 318 to 319 (RD) contacts GTP. Transmembrane regions (helical) follow at residues 544-564 (LAAV…GVVG) and 577-597 (GMVA…GGGV).

The protein belongs to the TRAFAC class dynamin-like GTPase superfamily. GB1/RHD3 GTPase family. GB1 subfamily. Self-associates. Interacts with SP1 in an oxidative stress-regulated manner. Interacts with SIGMAR1 in an oxidative stress-regulated manner. Interacts with ZBTB16 (via C2H2-type zinc finger domains 1 and 2). In terms of processing, auto-ubiquitinated.

The protein resides in the membrane. It is found in the cytoplasm. The protein localises to the nucleus. Its subcellular location is the nuclear body. It localises to the nucleoplasm. The protein resides in the endosome. It is found in the cytoplasmic vesicle. The protein localises to the secretory vesicle. Its subcellular location is the synaptic vesicle. It localises to the postsynaptic density. The protein resides in the perikaryon. It is found in the cell projection. The protein localises to the neuron projection. The catalysed reaction is S-ubiquitinyl-[E2 ubiquitin-conjugating enzyme]-L-cysteine + [acceptor protein]-L-lysine = [E2 ubiquitin-conjugating enzyme]-L-cysteine + N(6)-ubiquitinyl-[acceptor protein]-L-lysine.. It functions in the pathway protein modification; protein ubiquitination. Functionally, E3 ubiquitin-protein ligase that plays an important role in neuronal differentiation, including neurogenesis and gliogenesis, during brain development. During embryonic development initiates neuronal differentiation by inducing cell cycle arrest at the G0/G1 phase through up-regulation of cell-cycle regulatory proteins. Plays a role not only in the fetal period during the development of the nervous system, but also in the adult brain, where it is involved in the maintenance of neural functions and protection of the nervous tissue cells from oxidative stress-induced damage. Exhibits GTPase and E3 ubiquitin-protein ligase activities. Regulates dendritic spine density and synaptic neurotransmission; its ability to hydrolyze GTP is involved in the maintenance of dendritic spine density. The polypeptide is RING finger protein 112 (RNF112) (Bos taurus (Bovine)).